The chain runs to 435 residues: 5-hydroxybenzimidazole synthase (435 aa).

Residues Met-95, Tyr-124, His-163, 186-188 (SKG), 227-230 (NGLR), and Glu-266 contribute to the substrate site. His-270 provides a ligand contact to Zn(2+). Tyr-293 contacts substrate. Position 334 (His-334) interacts with Zn(2+). The [4Fe-4S] cluster site is built by Cys-410, Cys-413, and Cys-417.

This sequence belongs to the ThiC family. 5-hydroxybenzimidazole synthase subfamily. In terms of assembly, homodimer. Requires [4Fe-4S] cluster as cofactor.

It carries out the reaction 5-amino-1-(5-phospho-beta-D-ribosyl)imidazole + AH2 + S-adenosyl-L-methionine = 5-hydroxybenzimidazole + 5'-deoxyadenosine + formate + L-methionine + A + NH4(+) + phosphate + 2 H(+). It functions in the pathway cofactor biosynthesis; adenosylcobalamin biosynthesis. Catalyzes the complex conversion of aminoimidazole ribotide (AIR) to 5-hydroxybenzimidazole (5-HBI) in a radical S-adenosyl-L-methionine (SAM)-dependent reaction. Is thus involved in the anaerobic biosynthesis of dimethylbenzimidazole (DMB), the lower axial ligand of vitamin B12 (cobalamin). The polypeptide is 5-hydroxybenzimidazole synthase (Desulfuromonas acetoxidans (strain DSM 684 / 11070)).